We begin with the raw amino-acid sequence, 242 residues long: MSGHSKFANIKHKKEKNDATKGKIFTRLGREIAVAVKEGGPDPNNNNKLKDIVAKAKANNMPNDTIDRSIKKAAGEGNAVNYEFVTYEGYGPSGTAIIVEALTDNKNRTAANVRNAFTKGNGSVGTQGCVSYMFDQKGQIIIDKEECDMASDDLMMLALDAGASDFNEEDDSFEVLTEPDDFSVVRETLEKAGVPMMQAEVTMIPQTWVELSDETDLKNINRTLDLLDEDDDVQQVYHNWDE.

This sequence belongs to the TACO1 family.

The protein resides in the cytoplasm. The protein is Probable transcriptional regulatory protein Cphy_2507 of Lachnoclostridium phytofermentans (strain ATCC 700394 / DSM 18823 / ISDg) (Clostridium phytofermentans).